The chain runs to 308 residues: Very-long-chain enoyl-CoA reductase (308 aa).

Over methionine 1–serine 86 the chain is Cytoplasmic. Lysine 22 bears the N6-acetyllysine mark. The residue at position 58 (serine 58) is a Phosphoserine. The residue at position 60 (lysine 60) is an N6-acetyllysine. The chain crosses the membrane as a helical span at residues tryptophan 87–tyrosine 106. Over phenylalanine 107–histidine 124 the chain is Lumenal. Residues threonine 125–phenylalanine 147 form a helical membrane-spanning segment. Topologically, residues valine 148–leucine 158 are cytoplasmic. A helical transmembrane segment spans residues arginine 159 to asparagine 180. The Lumenal portion of the chain corresponds to histidine 181–tyrosine 189. A helical transmembrane segment spans residues glycine 190–arginine 216. Topologically, residues aspartate 217–cysteine 245 are cytoplasmic. Residues proline 246–threonine 262 form a helical membrane-spanning segment. At glutamine 263–cysteine 264 the chain is on the lumenal side. A helical transmembrane segment spans residues valine 265–glutamate 292. The Cytoplasmic segment spans residues phenylalanine 293–leucine 308.

It belongs to the steroid 5-alpha reductase family. In terms of assembly, interacts with ELOVL1 and LASS2. Glycosylated.

The protein localises to the endoplasmic reticulum membrane. The catalysed reaction is a very-long-chain 2,3-saturated fatty acyl-CoA + NADP(+) = a very-long-chain (2E)-enoyl-CoA + NADPH + H(+). It carries out the reaction octadecanoyl-CoA + NADP(+) = (2E)-octadecenoyl-CoA + NADPH + H(+). The enzyme catalyses (2E,7Z,10Z,13Z,16Z)-docosapentaenoyl-CoA + NADPH + H(+) = (7Z,10Z,13Z,16Z)-docosatetraenoyl-CoA + NADP(+). It catalyses the reaction (2E,7Z,10Z,13Z,16Z,19Z)-docosahexaenoyl-CoA + NADPH + H(+) = (7Z,10Z,13Z,16Z,19Z)-docosapentaenoyl-CoA + NADP(+). The catalysed reaction is (2E,8Z,11Z,14Z)-eicosatetraenoyl-CoA + NADPH + H(+) = (8Z,11Z,14Z)-eicosatrienoyl-CoA + NADP(+). It carries out the reaction (2E)-hexadecenoyl-CoA + NADPH + H(+) = hexadecanoyl-CoA + NADP(+). The protein operates within lipid metabolism; fatty acid biosynthesis. It participates in lipid metabolism; sphingolipid metabolism. Involved in both the production of very long-chain fatty acids for sphingolipid synthesis and the degradation of the sphingosine moiety in sphingolipids through the sphingosine 1-phosphate metabolic pathway. Catalyzes the last of the four reactions of the long-chain fatty acids elongation cycle. This endoplasmic reticulum-bound enzymatic process, allows the addition of 2 carbons to the chain of long- and very long-chain fatty acids/VLCFAs per cycle. This enzyme reduces the trans-2,3-enoyl-CoA fatty acid intermediate to an acyl-CoA that can be further elongated by entering a new cycle of elongation. Thereby, it participates in the production of VLCFAs of different chain lengths that are involved in multiple biological processes as precursors of membrane lipids and lipid mediators. Catalyzes the saturation step of the sphingosine 1-phosphate metabolic pathway, the conversion of trans-2-hexadecenoyl-CoA to palmitoyl-CoA. The protein is Very-long-chain enoyl-CoA reductase (Tecr) of Mus musculus (Mouse).